A 206-amino-acid polypeptide reads, in one-letter code: MSFLSIFTFFSVLISVATTVRFDLTNVTCKGLHGPHCGTYVMEVVGQNGTFLGQSTFVGADVLTESAGDAWARYLGQETRFLPKLTTIASNETKNFSPLIFTTNINTCNPQSIGDAMVPFANTVTGEIEYNSWADTADNASFITGLANQLFNSTDYGVQVASCYPNFASVILSTPAVNIFGKDDTLPDYCTAIQLKAVCPPEAGFD.

A signal peptide spans 1–19; the sequence is MSFLSIFTFFSVLISVATT. Residues asparagine 26, asparagine 48, asparagine 91, asparagine 139, and asparagine 152 are each glycosylated (N-linked (GlcNAc...) asparagine).

This sequence belongs to the VEL1 family. Post-translationally, N-glycosylated.

The protein resides in the cytoplasm. It is found in the cytosol. The protein is Protein VEL1 (VEL1) of Saccharomyces cerevisiae (strain ATCC 204508 / S288c) (Baker's yeast).